We begin with the raw amino-acid sequence, 456 residues long: Cyclic AMP-responsive element-binding protein 3-like protein 3 (456 aa).

2 disordered regions span residues 1–20 (MDGD…MGPI) and 47–120 (GHGE…KGPC). The Cytoplasmic segment spans residues 1-317 (MDGDLAIGKM…STSKSAQTGT (317 aa)). Over residues 71–85 (DSDSPTWSPAASDSG) the composition is skewed to polar residues. One can recognise a bZIP domain in the interval 238–301 (MLKKIRRKIR…LSLLEQLKKL (64 aa)). The basic motif stretch occupies residues 240–269 (KKIRRKIRNKQSAQESRKKKKEYIDGLETR). The tract at residues 280-301 (LQRKVLHLEKQNLSLLEQLKKL) is leucine-zipper. Lysine 289 participates in a covalent cross-link: Glycyl lysine isopeptide (Lys-Gly) (interchain with G-Cter in ubiquitin). A helical; Signal-anchor for type II membrane protein transmembrane segment spans residues 318-338 (CIAVLLFSFALIVLPSISPFA). Over 339–456 (SNRAESPGDF…VGLEAAGGEL (118 aa)) the chain is Lumenal. Disordered regions lie at residues 365–423 (RVAP…QGNS) and 435–456 (CAPP…GGEL). Residues asparagine 408 and asparagine 415 are each glycosylated (N-linked (GlcNAc...) asparagine).

The protein belongs to the bZIP family. ATF subfamily. As to quaternary structure, binds DNA as a dimer. May form homodimers. Interacts with ATF6. Interacts with SYNV1/HRD1; this interaction leads to CREB3L3 ubiquitination and proteasomal degradation. Post-translationally, controlled by regulated intramembrane proteolysis (RIP). Following ER stress a fragment containing the cytoplasmic transcription factor domain is released by proteolysis. The cleavage seems to be performed sequentially by site-1 and site-2 proteases (PS1 and PS2). N-glycosylation is required for optimal proteolytic activation. In terms of processing, ubiquitinated at Lys-289 by SYNV1/HRD1 via 'Lys-27'-linked ubiquitin.

It is found in the endoplasmic reticulum membrane. It localises to the nucleus. In terms of biological role, transcription factor that may act during endoplasmic reticulum stress by activating unfolded protein response target genes. Activated in response to cAMP stimulation. In vitro, binds the cAMP response element (CRE). Activates transcription through box-B element and CRE. Seems to function synergistically with ATF6. In acute inflammatory response, may activate expression of acute phase response (APR) genes. May be involved in growth suppression. Regulates FGF21 transcription. Plays a crucial role in the regulation of triglyceride metabolism and is required for the maintenance of normal plasma triglyceride concentrations. The sequence is that of Cyclic AMP-responsive element-binding protein 3-like protein 3 (CREB3L3) from Bos taurus (Bovine).